Here is a 334-residue protein sequence, read N- to C-terminus: Glyoxylate reductase (334 aa).

NADP(+)-binding positions include 158 to 161 (FGRI), 180 to 182 (SRT), and 239 to 241 (IAR). Catalysis depends on residues R241 and E270. The Proton donor role is filled by H288. Position 288-290 (288-290 (HIG)) interacts with NADP(+).

It belongs to the D-isomer specific 2-hydroxyacid dehydrogenase family. GyaR subfamily. As to quaternary structure, homodimer.

Its subcellular location is the cytoplasm. It carries out the reaction glycolate + NAD(+) = glyoxylate + NADH + H(+). The polypeptide is Glyoxylate reductase (Thermococcus onnurineus (strain NA1)).